Here is a 224-residue protein sequence, read N- to C-terminus: ATP phosphoribosyltransferase (224 aa).

It belongs to the ATP phosphoribosyltransferase family. Short subfamily. As to quaternary structure, heteromultimer composed of HisG and HisZ subunits.

The protein localises to the cytoplasm. It carries out the reaction 1-(5-phospho-beta-D-ribosyl)-ATP + diphosphate = 5-phospho-alpha-D-ribose 1-diphosphate + ATP. It functions in the pathway amino-acid biosynthesis; L-histidine biosynthesis; L-histidine from 5-phospho-alpha-D-ribose 1-diphosphate: step 1/9. In terms of biological role, catalyzes the condensation of ATP and 5-phosphoribose 1-diphosphate to form N'-(5'-phosphoribosyl)-ATP (PR-ATP). Has a crucial role in the pathway because the rate of histidine biosynthesis seems to be controlled primarily by regulation of HisG enzymatic activity. The polypeptide is ATP phosphoribosyltransferase (Cupriavidus necator (strain ATCC 17699 / DSM 428 / KCTC 22496 / NCIMB 10442 / H16 / Stanier 337) (Ralstonia eutropha)).